A 357-amino-acid chain; its full sequence is Anthranilate phosphoribosyltransferase (357 aa).

5-phospho-alpha-D-ribose 1-diphosphate-binding positions include G94, 97 to 98 (GD), T102, 104 to 107 (NLST), 122 to 130 (KHGNRAASS), and G134. Residue G94 participates in anthranilate binding. S106 lines the Mg(2+) pocket. Residue N125 coordinates anthranilate. Position 180 (R180) interacts with anthranilate. Mg(2+) contacts are provided by D238 and E239.

The protein belongs to the anthranilate phosphoribosyltransferase family. In terms of assembly, homodimer. Mg(2+) is required as a cofactor.

It catalyses the reaction N-(5-phospho-beta-D-ribosyl)anthranilate + diphosphate = 5-phospho-alpha-D-ribose 1-diphosphate + anthranilate. The protein operates within amino-acid biosynthesis; L-tryptophan biosynthesis; L-tryptophan from chorismate: step 2/5. In terms of biological role, catalyzes the transfer of the phosphoribosyl group of 5-phosphorylribose-1-pyrophosphate (PRPP) to anthranilate to yield N-(5'-phosphoribosyl)-anthranilate (PRA). The chain is Anthranilate phosphoribosyltransferase from Mycobacterium sp. (strain KMS).